We begin with the raw amino-acid sequence, 135 residues long: Flagellar assembly factor FliW 2 (135 aa).

It belongs to the FliW family. In terms of assembly, interacts with translational regulator CsrA and flagellin(s).

Its subcellular location is the cytoplasm. Acts as an anti-CsrA protein, binds CsrA and prevents it from repressing translation of its target genes, one of which is flagellin. Binds to flagellin and participates in the assembly of the flagellum. The sequence is that of Flagellar assembly factor FliW 2 from Helicobacter acinonychis (strain Sheeba).